The primary structure comprises 358 residues: UDP-N-acetylglucosamine--N-acetylmuramyl-(pentapeptide) pyrophosphoryl-undecaprenol N-acetylglucosamine transferase (358 aa).

Residues 13 to 15 (TGG), Asn125, Arg162, Ser190, Ile244, 263 to 268 (ALTVAE), and Gln289 each bind UDP-N-acetyl-alpha-D-glucosamine.

The protein belongs to the glycosyltransferase 28 family. MurG subfamily.

The protein resides in the cell inner membrane. It carries out the reaction di-trans,octa-cis-undecaprenyl diphospho-N-acetyl-alpha-D-muramoyl-L-alanyl-D-glutamyl-meso-2,6-diaminopimeloyl-D-alanyl-D-alanine + UDP-N-acetyl-alpha-D-glucosamine = di-trans,octa-cis-undecaprenyl diphospho-[N-acetyl-alpha-D-glucosaminyl-(1-&gt;4)]-N-acetyl-alpha-D-muramoyl-L-alanyl-D-glutamyl-meso-2,6-diaminopimeloyl-D-alanyl-D-alanine + UDP + H(+). The protein operates within cell wall biogenesis; peptidoglycan biosynthesis. Cell wall formation. Catalyzes the transfer of a GlcNAc subunit on undecaprenyl-pyrophosphoryl-MurNAc-pentapeptide (lipid intermediate I) to form undecaprenyl-pyrophosphoryl-MurNAc-(pentapeptide)GlcNAc (lipid intermediate II). The chain is UDP-N-acetylglucosamine--N-acetylmuramyl-(pentapeptide) pyrophosphoryl-undecaprenol N-acetylglucosamine transferase from Halorhodospira halophila (strain DSM 244 / SL1) (Ectothiorhodospira halophila (strain DSM 244 / SL1)).